Here is a 371-residue protein sequence, read N- to C-terminus: MYSETPIKRRPSSRIYVGKVPIGDGAPIAVQSMTNTKTTDVEATIAQIRALEKVGADIVRVSVPTMDAAEAFKIIKQSVNVPLVADIHFDYRIALKVAEYGVDCLRINPGNIGNEQRIRSVVECARDNNIPIRIGVNGGSLEKDLMDKYREPTPQALLESAMRHVDILDRLNFDQFKVSVKASDVFLAVESYRLLAKQIRQPLHLGITEAGGLRAGSVKSAVGLGMLLAEGIGDTIRISLAADPIEEIKVGFDILKSLRIRSRGINFIACPSCSRQEFDVINTVNELERRLEDLVTPMDVSIIGCVVNGPGEALVSHIGLTGGANKSGYYDDGVRQKERFDNLNLVDSLEAKIRAKASLMANRIAISDKTD.

Residues C270, C273, C305, and E312 each coordinate [4Fe-4S] cluster.

This sequence belongs to the IspG family. The cofactor is [4Fe-4S] cluster.

The catalysed reaction is (2E)-4-hydroxy-3-methylbut-2-enyl diphosphate + oxidized [flavodoxin] + H2O + 2 H(+) = 2-C-methyl-D-erythritol 2,4-cyclic diphosphate + reduced [flavodoxin]. Its pathway is isoprenoid biosynthesis; isopentenyl diphosphate biosynthesis via DXP pathway; isopentenyl diphosphate from 1-deoxy-D-xylulose 5-phosphate: step 5/6. In terms of biological role, converts 2C-methyl-D-erythritol 2,4-cyclodiphosphate (ME-2,4cPP) into 1-hydroxy-2-methyl-2-(E)-butenyl 4-diphosphate. The sequence is that of 4-hydroxy-3-methylbut-2-en-1-yl diphosphate synthase (flavodoxin) from Shewanella denitrificans (strain OS217 / ATCC BAA-1090 / DSM 15013).